The chain runs to 822 residues: Probable alpha,alpha-trehalose-phosphate synthase [UDP-forming] 2 (822 aa).

The interval 12 to 479 (PRLLVVANRL…GLDFMSELNG (468 aa)) is glycosyltransferase.

In the N-terminal section; belongs to the glycosyltransferase 20 family. It in the C-terminal section; belongs to the trehalose phosphatase family.

It carries out the reaction D-glucose 6-phosphate + UDP-alpha-D-glucose = alpha,alpha-trehalose 6-phosphate + UDP + H(+). The sequence is that of Probable alpha,alpha-trehalose-phosphate synthase [UDP-forming] 2 (TPS2) from Arabidopsis thaliana (Mouse-ear cress).